Here is a 192-residue protein sequence, read N- to C-terminus: Epoxyqueuosine reductase QueH (192 aa).

4 residues coordinate [4Fe-4S] cluster: Cys9, Cys10, Cys87, and Cys90. Cys169 and Cys171 form a disulfide bridge.

The protein belongs to the QueH family.

The enzyme catalyses epoxyqueuosine(34) in tRNA + AH2 = queuosine(34) in tRNA + A + H2O. It participates in tRNA modification; tRNA-queuosine biosynthesis. Functionally, catalyzes the conversion of epoxyqueuosine (oQ) to queuosine (Q), which is a hypermodified base found in the wobble positions of tRNA(Asp), tRNA(Asn), tRNA(His) and tRNA(Tyr). In Thermotoga maritima (strain ATCC 43589 / DSM 3109 / JCM 10099 / NBRC 100826 / MSB8), this protein is Epoxyqueuosine reductase QueH.